A 110-amino-acid chain; its full sequence is uncharacterized protein (110 aa).

The next 3 membrane-spanning stretches (helical) occupy residues 4 to 26 (LVGG…KSIN), 46 to 68 (ANRY…GLLL), and 72 to 91 (LFIL…FMLT).

It is found in the cell membrane. This is an uncharacterized protein from Bacillus subtilis (strain 168).